A 180-amino-acid polypeptide reads, in one-letter code: Translation initiation factor IF-3 (180 aa).

The protein belongs to the IF-3 family. As to quaternary structure, monomer.

The protein resides in the cytoplasm. Functionally, IF-3 binds to the 30S ribosomal subunit and shifts the equilibrium between 70S ribosomes and their 50S and 30S subunits in favor of the free subunits, thus enhancing the availability of 30S subunits on which protein synthesis initiation begins. The chain is Translation initiation factor IF-3 from Shewanella oneidensis (strain ATCC 700550 / JCM 31522 / CIP 106686 / LMG 19005 / NCIMB 14063 / MR-1).